The chain runs to 555 residues: Transmembrane protein 87B (555 aa).

Residues methionine 1–alanine 42 form the signal peptide. Over valine 43 to proline 216 the chain is Lumenal. N-linked (GlcNAc...) asparagine glycans are attached at residues asparagine 68, asparagine 160, and asparagine 198. A helical membrane pass occupies residues leucine 217–leucine 237. The Cytoplasmic portion of the chain corresponds to tryptophan 238 to arginine 248. A helical membrane pass occupies residues isoleucine 249 to serine 269. Residues glutamate 270 to arginine 300 are Lumenal-facing. A glycan (N-linked (GlcNAc...) asparagine) is linked at asparagine 275. Residues leucine 301–methionine 321 form a helical membrane-spanning segment. Residues histidine 322–arginine 323 are Cytoplasmic-facing. Residues valine 324–isoleucine 344 traverse the membrane as a helical segment. Over glycine 345–alanine 351 the chain is Lumenal. The chain crosses the membrane as a helical span at residues valine 352–isoleucine 372. At serine 373 to arginine 394 the chain is on the cytoplasmic side. The helical transmembrane segment at histidine 395 to threonine 415 threads the bilayer. Residues lysine 416 to glutamate 429 are Lumenal-facing. A helical transmembrane segment spans residues leucine 430 to phenylalanine 450. The Cytoplasmic portion of the chain corresponds to leucine 451–methionine 555. Phosphoserine is present on residues serine 470, serine 497, and serine 534.

This sequence belongs to the LU7TM family. TMEM87 subfamily.

The protein localises to the golgi apparatus membrane. Its function is as follows. May be involved in retrograde transport from endosomes to the trans-Golgi network (TGN). The sequence is that of Transmembrane protein 87B from Mus musculus (Mouse).